Consider the following 391-residue polypeptide: Carbamoyl phosphate synthase small chain (391 aa).

Positions 1 to 187 (MAGVKERAVL…PLPYAWPTLK (187 aa)) are CPSase. The L-glutamine site is built by Ser-50, Gly-239, and Gly-241. The region spanning 191–376 (RIVVMDFGIK…LEEVEAFHGA (186 aa)) is the Glutamine amidotransferase type-1 domain. Cys-266 serves as the catalytic Nucleophile. Leu-267, Gln-270, Asn-308, Gly-310, and Tyr-311 together coordinate L-glutamine. Residues His-349 and Glu-351 contribute to the active site.

The protein belongs to the CarA family. In terms of assembly, composed of two chains; the small (or glutamine) chain promotes the hydrolysis of glutamine to ammonia, which is used by the large (or ammonia) chain to synthesize carbamoyl phosphate. Tetramer of heterodimers (alpha,beta)4.

The enzyme catalyses hydrogencarbonate + L-glutamine + 2 ATP + H2O = carbamoyl phosphate + L-glutamate + 2 ADP + phosphate + 2 H(+). It carries out the reaction L-glutamine + H2O = L-glutamate + NH4(+). It functions in the pathway amino-acid biosynthesis; L-arginine biosynthesis; carbamoyl phosphate from bicarbonate: step 1/1. Its pathway is pyrimidine metabolism; UMP biosynthesis via de novo pathway; (S)-dihydroorotate from bicarbonate: step 1/3. Functionally, small subunit of the glutamine-dependent carbamoyl phosphate synthetase (CPSase). CPSase catalyzes the formation of carbamoyl phosphate from the ammonia moiety of glutamine, carbonate, and phosphate donated by ATP, constituting the first step of 2 biosynthetic pathways, one leading to arginine and/or urea and the other to pyrimidine nucleotides. The small subunit (glutamine amidotransferase) binds and cleaves glutamine to supply the large subunit with the substrate ammonia. The chain is Carbamoyl phosphate synthase small chain from Thermus thermophilus (strain ATCC BAA-163 / DSM 7039 / HB27).